A 228-amino-acid polypeptide reads, in one-letter code: Cytochrome c oxidase subunit 2 (228 aa).

Over 1 to 14 (MANHSQLGFQDASS) the chain is Mitochondrial intermembrane. The chain crosses the membrane as a helical span at residues 15–45 (PIMEELVEFHDHALIVALAICSLVLYLLAHM). Residues 46-58 (LMEKLSSNAVDAQ) are Mitochondrial matrix-facing. A helical transmembrane segment spans residues 59–86 (EVELIWTILPAIVLVLLALPSLQILYMM). At 87–228 (DEIDEPDLTL…EAWSSLLSSS (142 aa)) the chain is on the mitochondrial intermembrane side. Cu cation-binding residues include H160, C195, E197, C199, H203, and M206. E197 lines the Mg(2+) pocket.

It belongs to the cytochrome c oxidase subunit 2 family. In terms of assembly, component of the cytochrome c oxidase (complex IV, CIV), a multisubunit enzyme composed of 14 subunits. The complex is composed of a catalytic core of 3 subunits MT-CO1, MT-CO2 and MT-CO3, encoded in the mitochondrial DNA, and 11 supernumerary subunits COX4I, COX5A, COX5B, COX6A, COX6B, COX6C, COX7A, COX7B, COX7C, COX8 and NDUFA4, which are encoded in the nuclear genome. The complex exists as a monomer or a dimer and forms supercomplexes (SCs) in the inner mitochondrial membrane with NADH-ubiquinone oxidoreductase (complex I, CI) and ubiquinol-cytochrome c oxidoreductase (cytochrome b-c1 complex, complex III, CIII), resulting in different assemblies (supercomplex SCI(1)III(2)IV(1) and megacomplex MCI(2)III(2)IV(2)). Found in a complex with TMEM177, COA6, COX18, COX20, SCO1 and SCO2. Interacts with TMEM177 in a COX20-dependent manner. Interacts with COX20. Interacts with COX16. Requires Cu cation as cofactor.

It is found in the mitochondrion inner membrane. It carries out the reaction 4 Fe(II)-[cytochrome c] + O2 + 8 H(+)(in) = 4 Fe(III)-[cytochrome c] + 2 H2O + 4 H(+)(out). Component of the cytochrome c oxidase, the last enzyme in the mitochondrial electron transport chain which drives oxidative phosphorylation. The respiratory chain contains 3 multisubunit complexes succinate dehydrogenase (complex II, CII), ubiquinol-cytochrome c oxidoreductase (cytochrome b-c1 complex, complex III, CIII) and cytochrome c oxidase (complex IV, CIV), that cooperate to transfer electrons derived from NADH and succinate to molecular oxygen, creating an electrochemical gradient over the inner membrane that drives transmembrane transport and the ATP synthase. Cytochrome c oxidase is the component of the respiratory chain that catalyzes the reduction of oxygen to water. Electrons originating from reduced cytochrome c in the intermembrane space (IMS) are transferred via the dinuclear copper A center (CU(A)) of subunit 2 and heme A of subunit 1 to the active site in subunit 1, a binuclear center (BNC) formed by heme A3 and copper B (CU(B)). The BNC reduces molecular oxygen to 2 water molecules using 4 electrons from cytochrome c in the IMS and 4 protons from the mitochondrial matrix. The chain is Cytochrome c oxidase subunit 2 (MT-CO2) from Anas platyrhynchos (Mallard).